The primary structure comprises 509 residues: Kynureninase 1 (509 aa).

Pyridoxal 5'-phosphate contacts are provided by residues Leu169, Thr170, Phe197–Asp200, Asp283, His286, and Tyr308. At Lys309 the chain carries N6-(pyridoxal phosphate)lysine. Residues Trp349 and Asn377 each coordinate pyridoxal 5'-phosphate.

It belongs to the kynureninase family. Homodimer. Requires pyridoxal 5'-phosphate as cofactor.

It localises to the cytoplasm. The enzyme catalyses L-kynurenine + H2O = anthranilate + L-alanine + H(+). It catalyses the reaction 3-hydroxy-L-kynurenine + H2O = 3-hydroxyanthranilate + L-alanine + H(+). It functions in the pathway amino-acid degradation; L-kynurenine degradation; L-alanine and anthranilate from L-kynurenine: step 1/1. It participates in cofactor biosynthesis; NAD(+) biosynthesis; quinolinate from L-kynurenine: step 2/3. Its function is as follows. Catalyzes the cleavage of L-kynurenine (L-Kyn) and L-3-hydroxykynurenine (L-3OHKyn) into anthranilic acid (AA) and 3-hydroxyanthranilic acid (3-OHAA), respectively. The polypeptide is Kynureninase 1 (bna5-1) (Aspergillus fumigatus (strain CBS 144.89 / FGSC A1163 / CEA10) (Neosartorya fumigata)).